Here is a 509-residue protein sequence, read N- to C-terminus: Maturase K (509 aa).

This sequence belongs to the intron maturase 2 family. MatK subfamily.

It localises to the plastid. It is found in the chloroplast. In terms of biological role, usually encoded in the trnK tRNA gene intron. Probably assists in splicing its own and other chloroplast group II introns. This Solanum bulbocastanum (Wild potato) protein is Maturase K.